A 417-amino-acid polypeptide reads, in one-letter code: UDP-N-acetylglucosamine 1-carboxyvinyltransferase (417 aa).

22 to 23 (KN) is a binding site for phosphoenolpyruvate. R91 provides a ligand contact to UDP-N-acetyl-alpha-D-glucosamine. Catalysis depends on C115, which acts as the Proton donor. C115 bears the 2-(S-cysteinyl)pyruvic acid O-phosphothioketal mark. UDP-N-acetyl-alpha-D-glucosamine-binding positions include 120–124 (RPVDL), D304, and I326.

The protein belongs to the EPSP synthase family. MurA subfamily.

It is found in the cytoplasm. The catalysed reaction is phosphoenolpyruvate + UDP-N-acetyl-alpha-D-glucosamine = UDP-N-acetyl-3-O-(1-carboxyvinyl)-alpha-D-glucosamine + phosphate. Its pathway is cell wall biogenesis; peptidoglycan biosynthesis. Cell wall formation. Adds enolpyruvyl to UDP-N-acetylglucosamine. In Nitratidesulfovibrio vulgaris (strain DP4) (Desulfovibrio vulgaris), this protein is UDP-N-acetylglucosamine 1-carboxyvinyltransferase.